The following is a 316-amino-acid chain: Methionyl-tRNA formyltransferase (316 aa).

112 to 115 (SLLP) is a (6S)-5,6,7,8-tetrahydrofolate binding site.

The protein belongs to the Fmt family.

The enzyme catalyses L-methionyl-tRNA(fMet) + (6R)-10-formyltetrahydrofolate = N-formyl-L-methionyl-tRNA(fMet) + (6S)-5,6,7,8-tetrahydrofolate + H(+). Functionally, attaches a formyl group to the free amino group of methionyl-tRNA(fMet). The formyl group appears to play a dual role in the initiator identity of N-formylmethionyl-tRNA by promoting its recognition by IF2 and preventing the misappropriation of this tRNA by the elongation apparatus. In Trichlorobacter lovleyi (strain ATCC BAA-1151 / DSM 17278 / SZ) (Geobacter lovleyi), this protein is Methionyl-tRNA formyltransferase.